The chain runs to 159 residues: Transcription antitermination protein NusB (159 aa).

Belongs to the NusB family.

Its function is as follows. Involved in transcription antitermination. Required for transcription of ribosomal RNA (rRNA) genes. Binds specifically to the boxA antiterminator sequence of the ribosomal RNA (rrn) operons. The chain is Transcription antitermination protein NusB from Xanthomonas campestris pv. campestris (strain 8004).